The sequence spans 327 residues: 2-keto-3-deoxygluconate permease (327 aa).

The next 10 membrane-spanning stretches (helical) occupy residues 10–30 (IPGG…TFSP), 42–62 (GMIT…GASI), 73–93 (KSGT…AIAS), 95–115 (IIPE…LALV), 139–159 (AGAF…IILG), 163–183 (IASF…VGFA), 199–219 (VQTL…LTVI), 224–244 (LLGI…LIIA), 254–274 (TAGI…VLIA), and 289–309 (SLVA…TSIW).

It belongs to the KdgT transporter family.

The protein localises to the cell inner membrane. It carries out the reaction 2-dehydro-3-deoxy-D-gluconate(in) + H(+)(in) = 2-dehydro-3-deoxy-D-gluconate(out) + H(+)(out). In terms of biological role, catalyzes the proton-dependent uptake of 2-keto-3-deoxygluconate (KDG) into the cell. This chain is 2-keto-3-deoxygluconate permease, found in Escherichia coli O139:H28 (strain E24377A / ETEC).